Consider the following 315-residue polypeptide: Aspartate carbamoyltransferase catalytic subunit (315 aa).

Carbamoyl phosphate contacts are provided by Arg64 and Thr65. Lys92 lines the L-aspartate pocket. Residues Arg114, His142, and Gln145 each contribute to the carbamoyl phosphate site. Positions 175 and 229 each coordinate L-aspartate. Positions 270 and 271 each coordinate carbamoyl phosphate.

This sequence belongs to the aspartate/ornithine carbamoyltransferase superfamily. ATCase family. In terms of assembly, heterododecamer (2C3:3R2) of six catalytic PyrB chains organized as two trimers (C3), and six regulatory PyrI chains organized as three dimers (R2).

The enzyme catalyses carbamoyl phosphate + L-aspartate = N-carbamoyl-L-aspartate + phosphate + H(+). It participates in pyrimidine metabolism; UMP biosynthesis via de novo pathway; (S)-dihydroorotate from bicarbonate: step 2/3. Its function is as follows. Catalyzes the condensation of carbamoyl phosphate and aspartate to form carbamoyl aspartate and inorganic phosphate, the committed step in the de novo pyrimidine nucleotide biosynthesis pathway. The chain is Aspartate carbamoyltransferase catalytic subunit from Methylorubrum populi (strain ATCC BAA-705 / NCIMB 13946 / BJ001) (Methylobacterium populi).